A 463-amino-acid polypeptide reads, in one-letter code: UDP-N-acetylmuramoylalanine--D-glutamate ligase (463 aa).

121 to 127 (GTNGKST) is an ATP binding site.

It belongs to the MurCDEF family.

Its subcellular location is the cytoplasm. It carries out the reaction UDP-N-acetyl-alpha-D-muramoyl-L-alanine + D-glutamate + ATP = UDP-N-acetyl-alpha-D-muramoyl-L-alanyl-D-glutamate + ADP + phosphate + H(+). Its pathway is cell wall biogenesis; peptidoglycan biosynthesis. Functionally, cell wall formation. Catalyzes the addition of glutamate to the nucleotide precursor UDP-N-acetylmuramoyl-L-alanine (UMA). This chain is UDP-N-acetylmuramoylalanine--D-glutamate ligase (murD), found in Rhizobium meliloti (strain 1021) (Ensifer meliloti).